Reading from the N-terminus, the 385-residue chain is Zinc finger protein B385R (385 aa).

2 consecutive C2H2-type zinc fingers follow at residues 166 to 190 (LQCP…FYNH) and 168 to 190 (CPNC…FYNH).

Belongs to the asfivirus B385R family.

This chain is Zinc finger protein B385R, found in African swine fever virus (isolate Tick/Malawi/Lil 20-1/1983) (ASFV).